Reading from the N-terminus, the 352-residue chain is Ferrochelatase (352 aa).

Fe cation is bound by residues His222 and Glu303.

Belongs to the ferrochelatase family.

The protein localises to the cytoplasm. It catalyses the reaction heme b + 2 H(+) = protoporphyrin IX + Fe(2+). The protein operates within porphyrin-containing compound metabolism; protoheme biosynthesis; protoheme from protoporphyrin-IX: step 1/1. Catalyzes the ferrous insertion into protoporphyrin IX. The polypeptide is Ferrochelatase (Brucella canis (strain ATCC 23365 / NCTC 10854 / RM-666)).